Reading from the N-terminus, the 390-residue chain is MKATGIVVEYNPFHNGHKLHLNKARELTQADVVIAVMSGSFVQRGEPAILPKWERTRMALAAGVDMVVELPVSFATQHATIFAEEAVRILDAIHVDTLFFGSEHGVAEDFTLAAKKVVDNEARFDEAIQLALVDKKTSYARAYTEAFKKLFGQNLLDITKPNNILGFHYALAAQKQNPSISLQTIPREHAGYHDEEANHDQIASATAIRKLILAGKLEESSHYLPASSIAILRNYEGPFLSWTDYWSFLQYRLIQAGSEELEGIRGVSEGIQNRMQQAATKAQNFSDFIELTKTKRYSNARLQRTALQILLNARSQTSSPYIRILGMNKTGQQYLSLHKKNISLPIITTVSKAPAGLLEEELRATNIYTLAKGLENYQAGDFHIPPILTL.

ATP-binding positions include 7 to 20 (VVEYNPFHNGHKLH), Gly101, Asn162, and Arg187.

It belongs to the TmcAL family.

It localises to the cytoplasm. It carries out the reaction cytidine(34) in elongator tRNA(Met) + acetate + ATP = N(4)-acetylcytidine(34) in elongator tRNA(Met) + AMP + diphosphate. Functionally, catalyzes the formation of N(4)-acetylcytidine (ac(4)C) at the wobble position of elongator tRNA(Met), using acetate and ATP as substrates. First activates an acetate ion to form acetyladenylate (Ac-AMP) and then transfers the acetyl group to tRNA to form ac(4)C34. The sequence is that of tRNA(Met) cytidine acetate ligase from Listeria monocytogenes serotype 4b (strain F2365).